A 178-amino-acid polypeptide reads, in one-letter code: uncharacterized protein (178 aa).

The next 4 helical transmembrane spans lie at 29–49, 76–96, 105–125, and 139–159; these read AATG…AYLF, VISI…YFLL, PGIL…NPIF, and IITT…SISF.

The protein localises to the cell membrane. This is an uncharacterized protein from Bacillus subtilis (strain 168).